The primary structure comprises 434 residues: MLVHAYSAMDRSEVLNGAASGGRLSQLSSLNQGPYSSAPPLCHTPASDFQPPYFPPPYPQPPLSYSQSQESGYPHLGDPYSSINSIHHQHQQPSWHTPRSRPEEAGLLSQTHRGLSLDPRRDYGGMSRLIPGLTDGGHSLADSSLSIHALSHHSLEDMQLLDESGISILDQSVIKKVPISSKNNSSMMSALSMNKESLIGGVSNPNEVFCSVPGRLSLLSSTSKYKVTVGEVQRRLSPPECLNASLLGGVLRRAKSKNGGRCLRERLEKIGLNLPAGRRKAANVTLLTSLVEGEAVHLARDFGYVCETEFPAKAAAEYLCRQHSDPTELHARKNMLLATKQICKEFADLLAQDRSPLGNSRPSLILEPGVQSCLTHFSLITHGFGGPAICAALTAFQNYLLESLKGMDKIFMSSTGNGHSAAESKSEKDIKHRK.

Residues 30-123 form a disordered region; that stretch reads LNQGPYSSAP…GLSLDPRRDY (94 aa). Residues 52–62 are compositionally biased toward pro residues; the sequence is PYFPPPYPQPP. Residues 53–58 carry the PPxY motif motif; sequence YFPPPY. The segment covering 81–97 has biased composition (polar residues); that stretch reads SSINSIHHQHQQPSWHT. An H-S-H (helix-span-helix), dimerization region spans residues 278 to 408; that stretch reads RRKAANVTLL…YLLESLKGMD (131 aa). The segment at 415–434 is disordered; it reads TGNGHSAAESKSEKDIKHRK. Residues 422–434 show a composition bias toward basic and acidic residues; it reads AESKSEKDIKHRK.

This sequence belongs to the AP-2 family. As to quaternary structure, binds DNA as a dimer. Can form homodimers or heterodimers with other AP-2 family members.

It is found in the nucleus. Its function is as follows. Sequence-specific DNA-binding protein that interacts with inducible viral and cellular enhancer elements to regulate transcription of selected genes. AP-2 factors bind to the consensus sequence 5'-GCCNNNGGC-3' and activate genes involved in a large spectrum of important biological functions. This is Transcription factor AP-2-epsilon from Xenopus laevis (African clawed frog).